The sequence spans 285 residues: N-alpha-acetyltransferase 40 (285 aa).

The N-acetyltransferase domain maps to 88 to 274; sequence INYKLHKSRG…GGGRVVVPCD (187 aa). Substrate-binding positions include Y116, 163-165, and Y185; that span reads TEE. Residues 187-189 and 195-200 contribute to the acetyl-CoA site; these read VHV and GHGIGR. A substrate-binding site is contributed by T228. Residue N233 coordinates acetyl-CoA.

This sequence belongs to the acetyltransferase family. NAA40 subfamily.

It localises to the nucleus. The protein localises to the cytoplasm. It carries out the reaction N-terminal L-seryl-[histone H4] + acetyl-CoA = N-terminal N(alpha)-acetyl-L-seryl-[histone H4] + CoA + H(+). It catalyses the reaction N-terminal L-seryl-[histone H2A] + acetyl-CoA = N-terminal N(alpha)-acetyl-L-seryl-[histone H2A] + CoA + H(+). In terms of biological role, N-alpha-acetyltransferase that specifically mediates the acetylation of the N-terminal residues of histones H4 and H2A. This is N-alpha-acetyltransferase 40 from Saccharomyces cerevisiae (strain ATCC 204508 / S288c) (Baker's yeast).